Here is a 252-residue protein sequence, read N- to C-terminus: Carboxy-S-adenosyl-L-methionine synthase (252 aa).

Residues Tyr-45, 70-72 (GCS), 95-96 (DN), 123-124 (DI), Asn-138, and Arg-205 contribute to the S-adenosyl-L-methionine site.

It belongs to the class I-like SAM-binding methyltransferase superfamily. Cx-SAM synthase family. As to quaternary structure, homodimer.

The catalysed reaction is prephenate + S-adenosyl-L-methionine = carboxy-S-adenosyl-L-methionine + 3-phenylpyruvate + H2O. Catalyzes the conversion of S-adenosyl-L-methionine (SAM) to carboxy-S-adenosyl-L-methionine (Cx-SAM). The polypeptide is Carboxy-S-adenosyl-L-methionine synthase (Photorhabdus laumondii subsp. laumondii (strain DSM 15139 / CIP 105565 / TT01) (Photorhabdus luminescens subsp. laumondii)).